Reading from the N-terminus, the 271-residue chain is Mannosyl-3-phosphoglycerate phosphatase (271 aa).

The Nucleophile role is filled by Asp13. Residues Asp13, Asp15, and Asp214 each contribute to the Mg(2+) site.

This sequence belongs to the HAD-like hydrolase superfamily. MPGP family. Requires Mg(2+) as cofactor.

It localises to the cytoplasm. The enzyme catalyses 2-O-(alpha-D-mannosyl)-3-phosphoglycerate + H2O = (2R)-2-O-(alpha-D-mannosyl)-glycerate + phosphate. The sequence is that of Mannosyl-3-phosphoglycerate phosphatase from Escherichia coli (strain K12 / DH10B).